Consider the following 278-residue polypeptide: Digeranylgeranylglyceryl phosphate synthase (278 aa).

The next 7 membrane-spanning stretches (helical) occupy residues 12-32 (LKNC…ASNF), 34-54 (FGAL…CGFG), 92-112 (IMIF…MAVL), 129-149 (IIGN…GGIA), 199-219 (IYIS…PYLT), 221-241 (IFGI…LAGF), and 257-277 (SKNI…GSIF).

It belongs to the UbiA prenyltransferase family. DGGGP synthase subfamily. The cofactor is Mg(2+).

It is found in the cell membrane. The catalysed reaction is sn-3-O-(geranylgeranyl)glycerol 1-phosphate + (2E,6E,10E)-geranylgeranyl diphosphate = 2,3-bis-O-(geranylgeranyl)-sn-glycerol 1-phosphate + diphosphate. Its pathway is membrane lipid metabolism; glycerophospholipid metabolism. Its function is as follows. Prenyltransferase that catalyzes the transfer of the geranylgeranyl moiety of geranylgeranyl diphosphate (GGPP) to the C2 hydroxyl of (S)-3-O-geranylgeranylglyceryl phosphate (GGGP). This reaction is the second ether-bond-formation step in the biosynthesis of archaeal membrane lipids. The sequence is that of Digeranylgeranylglyceryl phosphate synthase from Methanococcus vannielii (strain ATCC 35089 / DSM 1224 / JCM 13029 / OCM 148 / SB).